A 538-amino-acid polypeptide reads, in one-letter code: Bifunctional purine biosynthesis protein PurH (538 aa).

In terms of domain architecture, MGS-like spans 8 to 158; sequence IPAPDKVEIK…KNHAYVTILT (151 aa).

The protein belongs to the PurH family.

It carries out the reaction (6R)-10-formyltetrahydrofolate + 5-amino-1-(5-phospho-beta-D-ribosyl)imidazole-4-carboxamide = 5-formamido-1-(5-phospho-D-ribosyl)imidazole-4-carboxamide + (6S)-5,6,7,8-tetrahydrofolate. The enzyme catalyses IMP + H2O = 5-formamido-1-(5-phospho-D-ribosyl)imidazole-4-carboxamide. It functions in the pathway purine metabolism; IMP biosynthesis via de novo pathway; 5-formamido-1-(5-phospho-D-ribosyl)imidazole-4-carboxamide from 5-amino-1-(5-phospho-D-ribosyl)imidazole-4-carboxamide (10-formyl THF route): step 1/1. It participates in purine metabolism; IMP biosynthesis via de novo pathway; IMP from 5-formamido-1-(5-phospho-D-ribosyl)imidazole-4-carboxamide: step 1/1. This is Bifunctional purine biosynthesis protein PurH from Rhizobium etli (strain CIAT 652).